Reading from the N-terminus, the 463-residue chain is L-seryl-tRNA(Sec) selenium transferase (463 aa).

Lys295 is modified (N6-(pyridoxal phosphate)lysine).

This sequence belongs to the SelA family. In terms of assembly, homodecamer; pentamer of dimers. Binds only one seryl-tRNA(Sec) per dimer. The cofactor is pyridoxal 5'-phosphate.

It localises to the cytoplasm. The enzyme catalyses L-seryl-tRNA(Sec) + selenophosphate + H(+) = L-selenocysteinyl-tRNA(Sec) + phosphate. It functions in the pathway aminoacyl-tRNA biosynthesis; selenocysteinyl-tRNA(Sec) biosynthesis; selenocysteinyl-tRNA(Sec) from L-seryl-tRNA(Sec) (bacterial route): step 1/1. Its function is as follows. Converts seryl-tRNA(Sec) to selenocysteinyl-tRNA(Sec) required for selenoprotein biosynthesis. The polypeptide is L-seryl-tRNA(Sec) selenium transferase (Escherichia coli O45:K1 (strain S88 / ExPEC)).